Consider the following 291-residue polypeptide: MTTESTSTVTAKIPAPATPYQGDIARYWNNEARPVNLRLGDVDGLYHHHYGIGAVDHAALGDPADSEYEKKLIAELHRLESAQAEFLMDHLGPIGSDDTLVDAGCGRGGSMVMAHRRFGCKVEGVTLSASQADFGNARARELRIEDHVRSRVCNMLDTPFDKGSIAASWNNESTMYVDLHDLFAEHSRFLEVGGRYVTITGCWNPRYGQPSKWVSQINAHFECNIHSRREYLRAMADNRLVPHTIVDLTPDTLPYWELRATSSLVTGIEKAFIESYRDGSFQYVLIAADRV.

Belongs to the geranyl diphosphate 2-C-methyltransferase family. It depends on Mg(2+) as a cofactor.

It catalyses the reaction (2E)-geranyl diphosphate + S-adenosyl-L-methionine = (E)-2-methylgeranyl diphosphate + S-adenosyl-L-homocysteine + H(+). Functionally, catalyzes the SAM-dependent methylation of geranyl diphosphate (GPP) to yield (E)-2-methylgeranyl diphosphate (2-MeGPP). This Streptomyces ambofaciens (strain ATCC 23877 / 3486 / DSM 40053 / JCM 4204 / NBRC 12836 / NRRL B-2516) protein is Geranyl diphosphate 2-C-methyltransferase.